Here is a 376-residue protein sequence, read N- to C-terminus: Queuine tRNA-ribosyltransferase (376 aa).

The Proton acceptor role is filled by Asp-93. Substrate-binding positions include 93-97 (DSGGF), Asp-147, Gln-190, and Gly-217. The segment at 248-254 (GVGKPDD) is RNA binding. Asp-267 serves as the catalytic Nucleophile. Zn(2+) contacts are provided by Cys-305, Cys-307, Cys-310, and His-336.

Belongs to the queuine tRNA-ribosyltransferase family. As to quaternary structure, homodimer. Within each dimer, one monomer is responsible for RNA recognition and catalysis, while the other monomer binds to the replacement base PreQ1. Zn(2+) serves as cofactor.

The catalysed reaction is 7-aminomethyl-7-carbaguanine + guanosine(34) in tRNA = 7-aminomethyl-7-carbaguanosine(34) in tRNA + guanine. It functions in the pathway tRNA modification; tRNA-queuosine biosynthesis. Functionally, catalyzes the base-exchange of a guanine (G) residue with the queuine precursor 7-aminomethyl-7-deazaguanine (PreQ1) at position 34 (anticodon wobble position) in tRNAs with GU(N) anticodons (tRNA-Asp, -Asn, -His and -Tyr). Catalysis occurs through a double-displacement mechanism. The nucleophile active site attacks the C1' of nucleotide 34 to detach the guanine base from the RNA, forming a covalent enzyme-RNA intermediate. The proton acceptor active site deprotonates the incoming PreQ1, allowing a nucleophilic attack on the C1' of the ribose to form the product. After dissociation, two additional enzymatic reactions on the tRNA convert PreQ1 to queuine (Q), resulting in the hypermodified nucleoside queuosine (7-(((4,5-cis-dihydroxy-2-cyclopenten-1-yl)amino)methyl)-7-deazaguanosine). The protein is Queuine tRNA-ribosyltransferase of Ruegeria sp. (strain TM1040) (Silicibacter sp.).